Consider the following 804-residue polypeptide: MIARWFWREWRSPSLLIVWLALSLAVACVLALGNISDRMEKGLSQQSREFMAGDRALRSSREVPQAWLEEAQKRGLKVGKQLTFATMTFAGDTPQLANVKAVDDIYPMYGDLQTNPPGLKPQAGSVLLAPRLMALLNLKTGDTIDVGDATLRIAGEVIQEPDSGFNPFQMAPRLMMNLADVDKTGAVQPGSRVTWRYKFGGNENQLDGYEKWLLPQLKPEQRWYGLEQDEGALGRSMERSQQFLLLSALLTLLLAVAAVAVAMNHYCRSRYDLVAILKTLGAGRAQLRKLIVGQWLMVLTLSAVTGGAIGLLFENVLMVLLKPVLPAALPPASLWPWLWALGTMTVISLLVGLRPYRLLLATQPLRVLRNDVVANVWPLKFYLPIVSVVVVLLLAGLMGGSMLLWAVLAGAVVLALLCGVLGWMLLNVLRRMTLKSLPLRLAVSRLLRQPWSTLSQLSAFSLSFMLLALLLVLRGDLLDRWQQQLPPESPNYFLINIATEQVAPLKAFLAEHQIVPESFYPVVRARLTAINDKPTEGNEDEALNRELNLTWQNTRPDHNPIVAGNWPPKADEVSMEEGLAKRLNVALGDTVTFMGDTQEFRAKVTSLRKVDWESLRPNFYFIFPEGALDGQPQSWLTSFRWENGNGMLTQLNRQFPTISLLDIGAILKQVGQVLEQVSRALEVMVVLVTACGMLLLLAQVQVGMRQRHQELVVWRTLGAGKKLLRTTLWCEFAMLGFVSGLVAAIGAETALAVLQAKVFDFPWEPDWRLWIVLPCSGALLLSLFGGWLGARLVKGKALFRQFAG.

10 helical membrane passes run 15-35 (LLIV…LGNI), 243-263 (FLLL…AVAM), 301-321 (LSAV…MVLL), 333-353 (SLWP…LVGL), 381-401 (FYLP…MGGS), 403-423 (LLWA…VLGW), 453-473 (TLSQ…LLVL), 680-700 (ALEV…LAQV), 734-754 (MLGF…LAVL), and 769-789 (LWIV…GWLG).

It belongs to the ABC-4 integral membrane protein family.

It localises to the cell membrane. This is an uncharacterized protein from Escherichia coli (strain K12).